The following is a 103-amino-acid chain: Putative septation protein SpoVG (103 aa).

This sequence belongs to the SpoVG family.

Functionally, could be involved in septation. This is Putative septation protein SpoVG from Exiguobacterium sibiricum (strain DSM 17290 / CCUG 55495 / CIP 109462 / JCM 13490 / 255-15).